The chain runs to 1088 residues: Protein unc-13 homolog D (1088 aa).

The segment at 26-46 is disordered; it reads VRDLQDPPPQATPEVQVQSHH. The C2 1 domain occupies 92–239; it reads QPEEHQQMLQ…FKEARKDKGQ (148 aa). Ca(2+)-binding residues include Asp-127 and Asp-133. Phosphoserine is present on Ser-150. The Ca(2+) site is built by Asp-206 and Asp-208. An interaction with RAB27A region spans residues 240-543; the sequence is DDFLGNVMLR…AKRVQDHTAA (304 aa). Residues 557–675 form the MHD1 domain; it reads FQLYVSLREF…RLALVYCSLI (119 aa). Residues 786–893 form the MHD2 domain; that stretch reads EDAILPLMKF…ASSRELIQKY (108 aa). The 126-residue stretch at 908–1033 folds into the C2 2 domain; sequence RLGAVTVKAS…PGLTGCVEPG (126 aa). Ca(2+) is bound by residues Leu-938, Asp-939, Asp-945, Asp-1003, Asp-1005, and Asp-1011.

It belongs to the unc-13 family. In terms of assembly, interacts with RAB27A and DOC2A. Interacts with RhoG; the interaction increases RhoG affinity to the membrane lipids, targets Unc13d to membrane lipids and facilitates cytotoxic granule (CG) docking to the plasma membrane. It depends on Ca(2+) as a cofactor. Expressed in lung bronchial epithelium goblet/mucous cells. Also expressed in spleen and testis. Expressed at very low levels in heart muscle, kidney, liver, brain and skeletal muscle.

Its subcellular location is the cytoplasm. It localises to the membrane. The protein localises to the late endosome. The protein resides in the recycling endosome. It is found in the lysosome. Plays a role in cytotoxic granule exocytosis in lymphocytes. Required for both granule maturation and granule docking and priming at the immunologic synapse. Regulates assembly of recycling and late endosomal structures, leading to the formation of an endosomal exocytic compartment that fuses with perforin-containing granules at the immunologic synapse and licences them for exocytosis. Regulates Ca(2+)-dependent secretory lysosome exocytosis in mast cells. The chain is Protein unc-13 homolog D (Unc13d) from Rattus norvegicus (Rat).